Reading from the N-terminus, the 547-residue chain is Glucose-6-phosphate isomerase (547 aa).

Catalysis depends on E353, which acts as the Proton donor. Catalysis depends on residues H384 and K512.

This sequence belongs to the GPI family.

The protein resides in the cytoplasm. The catalysed reaction is alpha-D-glucose 6-phosphate = beta-D-fructose 6-phosphate. It functions in the pathway carbohydrate biosynthesis; gluconeogenesis. It participates in carbohydrate degradation; glycolysis; D-glyceraldehyde 3-phosphate and glycerone phosphate from D-glucose: step 2/4. In terms of biological role, catalyzes the reversible isomerization of glucose-6-phosphate to fructose-6-phosphate. The chain is Glucose-6-phosphate isomerase from Glaesserella parasuis serovar 5 (strain SH0165) (Haemophilus parasuis).